The chain runs to 157 residues: Small ribosomal subunit protein uS7 (157 aa).

This sequence belongs to the universal ribosomal protein uS7 family. In terms of assembly, part of the 30S ribosomal subunit. Contacts proteins S9 and S11.

Functionally, one of the primary rRNA binding proteins, it binds directly to 16S rRNA where it nucleates assembly of the head domain of the 30S subunit. Is located at the subunit interface close to the decoding center, probably blocks exit of the E-site tRNA. The polypeptide is Small ribosomal subunit protein uS7 (Chloroflexus aurantiacus (strain ATCC 29366 / DSM 635 / J-10-fl)).